A 494-amino-acid chain; its full sequence is UDP-N-acetylmuramoyl-L-alanyl-D-glutamate--L-lysine ligase (494 aa).

Ser30 lines the UDP-N-acetyl-alpha-D-muramoyl-L-alanyl-D-glutamate pocket. Position 110–116 (110–116) interacts with ATP; the sequence is GTNGKTS. UDP-N-acetyl-alpha-D-muramoyl-L-alanyl-D-glutamate-binding positions include 152-153, Ser179, and Arg187; that span reads TT. Residue Lys219 is modified to N6-carboxylysine. Residues 406–409 carry the L-lysine recognition motif motif; the sequence is DNPA.

The protein belongs to the MurCDEF family. MurE subfamily. Carboxylation is probably crucial for Mg(2+) binding and, consequently, for the gamma-phosphate positioning of ATP.

It is found in the cytoplasm. It catalyses the reaction UDP-N-acetyl-alpha-D-muramoyl-L-alanyl-D-glutamate + L-lysine + ATP = UDP-N-acetyl-alpha-D-muramoyl-L-alanyl-gamma-D-glutamyl-L-lysine + ADP + phosphate + H(+). It functions in the pathway cell wall biogenesis; peptidoglycan biosynthesis. Its function is as follows. Catalyzes the addition of L-lysine to the nucleotide precursor UDP-N-acetylmuramoyl-L-alanyl-D-glutamate (UMAG) in the biosynthesis of bacterial cell-wall peptidoglycan. The protein is UDP-N-acetylmuramoyl-L-alanyl-D-glutamate--L-lysine ligase of Staphylococcus aureus (strain Mu3 / ATCC 700698).